Consider the following 359-residue polypeptide: Aminomethyltransferase (359 aa).

The protein belongs to the GcvT family. In terms of assembly, the glycine cleavage system is composed of four proteins: P, T, L and H.

The catalysed reaction is N(6)-[(R)-S(8)-aminomethyldihydrolipoyl]-L-lysyl-[protein] + (6S)-5,6,7,8-tetrahydrofolate = N(6)-[(R)-dihydrolipoyl]-L-lysyl-[protein] + (6R)-5,10-methylene-5,6,7,8-tetrahydrofolate + NH4(+). Its function is as follows. The glycine cleavage system catalyzes the degradation of glycine. The protein is Aminomethyltransferase of Synechococcus sp. (strain RCC307).